A 286-amino-acid polypeptide reads, in one-letter code: NAD kinase (286 aa).

The Proton acceptor role is filled by D67. NAD(+)-binding positions include 67–68 (DG), R72, 141–142 (ND), R152, D171, 182–187 (TAYSLS), and Q242.

It belongs to the NAD kinase family. A divalent metal cation serves as cofactor.

The protein resides in the cytoplasm. The enzyme catalyses NAD(+) + ATP = ADP + NADP(+) + H(+). Its function is as follows. Involved in the regulation of the intracellular balance of NAD and NADP, and is a key enzyme in the biosynthesis of NADP. Catalyzes specifically the phosphorylation on 2'-hydroxyl of the adenosine moiety of NAD to yield NADP. This Ruminiclostridium cellulolyticum (strain ATCC 35319 / DSM 5812 / JCM 6584 / H10) (Clostridium cellulolyticum) protein is NAD kinase.